A 141-amino-acid polypeptide reads, in one-letter code: Large ribosomal subunit protein uL16 (141 aa).

Belongs to the universal ribosomal protein uL16 family. Part of the 50S ribosomal subunit.

Its function is as follows. Binds 23S rRNA and is also seen to make contacts with the A and possibly P site tRNAs. The sequence is that of Large ribosomal subunit protein uL16 from Petrotoga mobilis (strain DSM 10674 / SJ95).